We begin with the raw amino-acid sequence, 475 residues long: Coronin-2B (475 aa).

WD repeat units lie at residues 80–120, 130–172, 174–212, 215–258, and 260–303; these read GHQG…LKRN, GHSR…KMID, HTDV…VLQE, CKNH…MPVT, and EEID…PYLT. Residues 431–470 are a coiled coil; that stretch reads NELLRMFFKQQEEIRRLKEQLSQRDLLVRQLELELKNLRN.

It belongs to the WD repeat coronin family.

The protein localises to the cytoplasm. It localises to the cytoskeleton. Functionally, may play a role in the reorganization of neuronal actin structure. The polypeptide is Coronin-2B (coro2b) (Xenopus laevis (African clawed frog)).